A 298-amino-acid polypeptide reads, in one-letter code: Probable GTP 3',8-cyclase (298 aa).

In terms of domain architecture, Radical SAM core spans 4–230; it reads KFGREIRSLR…RKKYIVDGLE (227 aa). Arg13 serves as a coordination point for GTP. [4Fe-4S] cluster contacts are provided by Cys20 and Cys24. Tyr26 is an S-adenosyl-L-methionine binding site. Cys27 provides a ligand contact to [4Fe-4S] cluster. Lys61 contributes to the GTP binding site. S-adenosyl-L-methionine is bound at residue Gly65. Residue Thr91 coordinates GTP. Ser115 contacts S-adenosyl-L-methionine. Residue Lys152 participates in GTP binding. Positions 243 and 246 each coordinate [4Fe-4S] cluster. 248-250 is a GTP binding site; that stretch reads RIR. Cys260 is a binding site for [4Fe-4S] cluster.

This sequence belongs to the radical SAM superfamily. MoaA family. [4Fe-4S] cluster serves as cofactor.

It catalyses the reaction GTP + AH2 + S-adenosyl-L-methionine = (8S)-3',8-cyclo-7,8-dihydroguanosine 5'-triphosphate + 5'-deoxyadenosine + L-methionine + A + H(+). The protein operates within cofactor biosynthesis; molybdopterin biosynthesis. Catalyzes the cyclization of GTP to (8S)-3',8-cyclo-7,8-dihydroguanosine 5'-triphosphate. This Methanocaldococcus jannaschii (strain ATCC 43067 / DSM 2661 / JAL-1 / JCM 10045 / NBRC 100440) (Methanococcus jannaschii) protein is Probable GTP 3',8-cyclase.